Consider the following 470-residue polypeptide: Annexin C1 (470 aa).

The segment at Met1–Gly143 is disordered. The span at Gln15–Ala34 shows a compositional bias: low complexity. The span at Pro82 to Ala92 shows a compositional bias: pro residues. Composition is skewed to low complexity over residues Pro93 to Pro110 and Gly128 to Pro138. Annexin repeat units follow at residues Tyr161–Leu232, Gly233–Ser304, Gln316–Arg388, and Asp395–Glu468.

This sequence belongs to the annexin family.

In terms of biological role, does not appear to play a major role in virulence. May play a role in titan cell formation. The chain is Annexin C1 from Cryptococcus neoformans var. grubii serotype A (strain H99 / ATCC 208821 / CBS 10515 / FGSC 9487) (Filobasidiella neoformans var. grubii).